Reading from the N-terminus, the 259-residue chain is Major prion protein (259 aa).

Positions 1–24 (MGKIQLGYWILVLFIVTWSDLGLC) are cleaved as a signal peptide. Residues 25–235 (KKPKPRPGGG…EYEAAAQRAY (211 aa)) form an interaction with GRB2, ERI3 and SYN1 region. The interval 29 to 110 (PRPGGGWNSG…GYNKWKPDKP (82 aa)) is disordered. Cu(2+) contacts are provided by glycine 63, glycine 64, histidine 72, glycine 74, histidine 82, glycine 84, histidine 92, and glycine 94. Residues 91–101 (PHGGSNWGQGG) show a composition bias toward gly residues. Cysteine 184 and cysteine 219 form a disulfide bridge. 2 N-linked (GlcNAc...) asparagine glycosylation sites follow: asparagine 186 and asparagine 202. A lipid anchor (GPI-anchor amidated asparagine) is attached at asparagine 236. Positions 237–259 (MAFFSAPPVTLLFLSFLIFLIVS) are cleaved as a propeptide — removed in mature form.

Belongs to the prion family. As to quaternary structure, monomer and homodimer. Has a tendency to aggregate into amyloid fibrils containing a cross-beta spine, formed by a steric zipper of superposed beta-strands. Soluble oligomers may represent an intermediate stage on the path to fibril formation. Copper binding may promote oligomerization. Interacts with GRB2, APP, ERI3/PRNPIP and SYN1. Mislocalized cytosolically exposed PrP interacts with MGRN1; this interaction alters MGRN1 subcellular location and causes lysosomal enlargement. Interacts with KIAA1191.

It is found in the cell membrane. The protein localises to the golgi apparatus. Functionally, its primary physiological function is unclear. Has cytoprotective activity against internal or environmental stresses. May play a role in neuronal development and synaptic plasticity. May be required for neuronal myelin sheath maintenance. May play a role in iron uptake and iron homeostasis. Soluble oligomers are toxic to cultured neuroblastoma cells and induce apoptosis (in vitro). Association with GPC1 (via its heparan sulfate chains) targets PRNP to lipid rafts. Also provides Cu(2+) or Zn(2+) for the ascorbate-mediated GPC1 deaminase degradation of its heparan sulfate side chains. The chain is Major prion protein (PRNP) from Trichosurus vulpecula (Brush-tailed possum).